Consider the following 439-residue polypeptide: Xylose isomerase (439 aa).

Residues His-101 and Asp-104 contribute to the active site. 7 residues coordinate Mg(2+): Glu-232, Glu-268, His-271, Asp-296, Asp-307, Asp-309, and Asp-339.

Belongs to the xylose isomerase family. As to quaternary structure, homotetramer. It depends on Mg(2+) as a cofactor.

The protein resides in the cytoplasm. The enzyme catalyses alpha-D-xylose = alpha-D-xylulofuranose. The chain is Xylose isomerase from Haemophilus influenzae (strain PittEE).